An 86-amino-acid polypeptide reads, in one-letter code: BaSO(4)-adsorbing protein 1 (86 aa).

Disulfide bonds link C6–C22, C18–C49, and C39–C54. The disordered stretch occupies residues 58–86 (GDSASNTQNQGGSRRQENEDQGDDEWDRK). Positions 59–70 (DSASNTQNQGGS) are enriched in polar residues. Residues 76 to 86 (EDQGDDEWDRK) show a composition bias toward acidic residues.

In terms of tissue distribution, salivary gland (at protein level).

It is found in the secreted. In terms of biological role, inhibits lectin and classical pathways of complement system activation in the host with no significant effect on the alternative pathway. Inhibits host extrinsic blood coagulation pathway but not the intrinsic cascade. Binds to neutral and negatively charged membranes in vitro; binding is reduced upon pre-incubation with Ca(2+). The sequence is that of BaSO(4)-adsorbing protein 1 from Ornithodoros savignyi (African eyed tampan).